Here is a 337-residue protein sequence, read N- to C-terminus: tRNA N6-adenosine threonylcarbamoyltransferase (337 aa).

His111 and His115 together coordinate Fe cation. Substrate contacts are provided by residues 134–138 (LVSGG), Asp167, Gly180, and Asn272. A Fe cation-binding site is contributed by Asp300.

The protein belongs to the KAE1 / TsaD family. It depends on Fe(2+) as a cofactor.

The protein localises to the cytoplasm. It catalyses the reaction L-threonylcarbamoyladenylate + adenosine(37) in tRNA = N(6)-L-threonylcarbamoyladenosine(37) in tRNA + AMP + H(+). In terms of biological role, required for the formation of a threonylcarbamoyl group on adenosine at position 37 (t(6)A37) in tRNAs that read codons beginning with adenine. Is involved in the transfer of the threonylcarbamoyl moiety of threonylcarbamoyl-AMP (TC-AMP) to the N6 group of A37, together with TsaE and TsaB. TsaD likely plays a direct catalytic role in this reaction. This chain is tRNA N6-adenosine threonylcarbamoyltransferase, found in Shewanella woodyi (strain ATCC 51908 / MS32).